Consider the following 137-residue polypeptide: Large ribosomal subunit protein uL16 (137 aa).

Belongs to the universal ribosomal protein uL16 family. As to quaternary structure, part of the 50S ribosomal subunit.

In terms of biological role, binds 23S rRNA and is also seen to make contacts with the A and possibly P site tRNAs. The sequence is that of Large ribosomal subunit protein uL16 from Chelativorans sp. (strain BNC1).